An 8515-amino-acid polypeptide reads, in one-letter code: Nonribosomal peptide synthetase 8 (8515 aa).

Adenylation regions lie at residues 59–736 and 1163–1705; these read REHH…YRCS and AKLS…EWVE. A condensation 1 region spans residues 587-1159; sequence RRVVQWLENL…TVGEVALVGD (573 aa). A Carrier 1 domain is found at 615 to 691; it reads EPETAMERRL…ELAPRVKVAE (77 aa). The residue at position 652 (Ser652) is an O-(pantetheine 4'-phosphoryl)serine. The 77-residue stretch at 1732 to 1808 folds into the Carrier 2 domain; it reads RGLTPTETVI…KLGRHADHSS (77 aa). O-(pantetheine 4'-phosphoryl)serine is present on Ser1769. The segment at 1830-2273 is epimerase 1; that stretch reads LSPIQQWFFE…TLYDCPLAAL (444 aa). A condensation 2 region spans residues 2301–2709; the sequence is SHIQEGILLS…RSPEAVLHDL (409 aa). The segment at 2733-3266 is adenylation 3; it reads QCLHWLIEQW…RMILSWLSEP (534 aa). Residues 3286-3362 form the Carrier 3 domain; it reads TTLGPVEKQM…KVTPRTISLS (77 aa). Ser3323 carries the post-translational modification O-(pantetheine 4'-phosphoryl)serine. Residues 3406-3819 form a condensation 3 region; it reads SPMQEGILLA…DNSGCSVKTV (414 aa). In terms of domain architecture, Carrier 4 spans 3857-3933; that stretch reads EPTNLIALTV…EVFEHARFSD (77 aa). Ser3894 bears the O-(pantetheine 4'-phosphoryl)serine mark. The segment at 3953–4392 is epimerase 2; it reads LSPIQKLHFH…TPSDFQLLSL (440 aa). A condensation 4 region spans residues 4420-4823; sequence PCSPMQEGIL…ARPRARLGTI (404 aa). An adenylation 4 region spans residues 4837–5363; the sequence is WNEQARRPVV…RKVNKWLESF (527 aa). Positions 5385-5461 constitute a Carrier 5 domain; sequence PPLTPIQQTI…SLAACATAII (77 aa). At Ser5422 the chain carries O-(pantetheine 4'-phosphoryl)serine. A condensation 5 region spans residues 5508–5923; sequence SPMQEGILFS…SLVDHLSLCS (416 aa). Residues 5941 to 6459 are adenylation 5; the sequence is ELRQCLHELI…GKVDRQALRR (519 aa). The region spanning 6482–6558 is the Carrier 6 domain; it reads PISTAEEQQM…DLATLLESPA (77 aa). Ser6519 is modified (O-(pantetheine 4'-phosphoryl)serine). The condensation 6 stretch occupies residues 6606–6992; that stretch reads CTPLQESLMA…SQMKSVMGTL (387 aa). Positions 7030-7544 are adenylation 6; the sequence is VEDLIISRAQ…SSGKLARKGV (515 aa). The Carrier 7 domain maps to 7575-7651; the sequence is IASSSVERAI…HLASREDLTA (77 aa). Ser7612 is subject to O-(pantetheine 4'-phosphoryl)serine. Residues 7670–8119 are epimerase 3; it reads LTPIQRFFFC…DYPRARLDYT (450 aa). The condensation 7 stretch occupies residues 8164–8504; the sequence is HFIWKIAGTK…DPTSPLQFAD (341 aa). The segment covering 8488–8500 has biased composition (polar residues); it reads AVNSVSSDPTSPL. A disordered region spans residues 8488-8515; the sequence is AVNSVSSDPTSPLQFADGQDPMPVSHQP.

This sequence belongs to the NRP synthetase family.

Its function is as follows. Nonribosomal peptide synthesis (NRPS) is a key mechanism responsible for the biosynthesis of bioactive metabolites which are potentially contributing to organismal virulence. However, contarary to other nonribosomal peptide synthases, NRPS8 does not encode a secreted peptide, but has more a structural role since it is involved in germ tube formation. This Aspergillus fumigatus (strain ATCC MYA-4609 / CBS 101355 / FGSC A1100 / Af293) (Neosartorya fumigata) protein is Nonribosomal peptide synthetase 8 (NRPS8).